The primary structure comprises 124 residues: Small ribosomal subunit protein uS12c (124 aa).

The segment at A105–A124 is disordered. A compositionally biased stretch (basic residues) spans S113 to A124.

Belongs to the universal ribosomal protein uS12 family. In terms of assembly, part of the 30S ribosomal subunit.

The protein localises to the plastid. It is found in the cyanelle. Functionally, with S4 and S5 plays an important role in translational accuracy. Located at the interface of the 30S and 50S subunits. The polypeptide is Small ribosomal subunit protein uS12c (rps12) (Cyanophora paradoxa).